Reading from the N-terminus, the 145-residue chain is FAD synthase (145 aa).

ATP contacts are provided by residues 5-6 (TF), 10-13 (HPGH), aspartate 92, and tyrosine 119.

It belongs to the archaeal FAD synthase family. In terms of assembly, homodimer. The cofactor is a divalent metal cation.

The catalysed reaction is FMN + ATP + H(+) = FAD + diphosphate. The protein operates within cofactor biosynthesis; FAD biosynthesis; FAD from FMN: step 1/1. Its function is as follows. Catalyzes the transfer of the AMP portion of ATP to flavin mononucleotide (FMN) to produce flavin adenine dinucleotide (FAD) coenzyme. This Methanothermus fervidus (strain ATCC 43054 / DSM 2088 / JCM 10308 / V24 S) protein is FAD synthase.